A 1572-amino-acid polypeptide reads, in one-letter code: E3 ubiquitin-protein ligase HECW2 (1572 aa).

At S48 the chain carries Phosphoserine. Residues 167 to 301 (GAEGMEGGAS…QAIGDQMLSY (135 aa)) form the C2 domain. Disordered regions lie at residues 341–452 (VNSV…SSFP) and 489–796 (IMFS…PSVR). Low complexity predominate over residues 400 to 410 (TSTSSRTSPPR). The segment covering 518–532 (ASTHEAASFEDKPEN) has biased composition (basic and acidic residues). 4 stretches are compositionally biased toward polar residues: residues 572-588 (EVDQPTSGADTGTSDAS), 597-614 (ETESLDQGSEPSQVSSET), 643-664 (SSCNESVTTQLSSVDTRCSSLE), and 688-703 (PTSSGPAEGSQESVCT). The interaction with TP73 stretch occupies residues 737-1068 (WQRRGSLEGA…PRPSSTFNTV (332 aa)). Residues 744–776 (EGAAAAAESPPQEEGSAGEAQGTCEGATAQEEG) show a composition bias toward low complexity. A WW 1 domain is found at 807 to 840 (EALPPNWEARIDSHGRIFYVDHVNRTTTWQRPTA). Residues 847-874 (LQRSNSIQQMEQLNRRYQSIRRTMTNER) adopt a coiled-coil conformation. Phosphoserine occurs at positions 852 and 909. Residues 985-1018 (LELPRGWEMKHDHQGKAFFVDHNSRTTTFIDPRL) enclose the WW 2 domain. 2 disordered regions span residues 1024–1069 (RPTS…NTVS) and 1161–1187 (CQSPRGSPVSSPQNSPGTQRANARAPA). Residues 1031–1040 (HRQHLTRQRS) are compositionally biased toward basic residues. Polar residues predominate over residues 1161-1181 (CQSPRGSPVSSPQNSPGTQRA). S1175 bears the Phosphoserine mark. Positions 1237–1572 (SRKDLQRNKL…VEETSTFGLE (336 aa)) constitute an HECT domain. The active-site Glycyl thioester intermediate is the C1540.

Interacts with TP73. Interacts with FZR1. Ubiquitinated and degraded during mitotic exit by APC/C-Cdh1. Predominantly expressed in adult brain, lung and heart.

The protein resides in the cytoplasm. The protein localises to the cytoskeleton. Its subcellular location is the spindle. It carries out the reaction S-ubiquitinyl-[E2 ubiquitin-conjugating enzyme]-L-cysteine + [acceptor protein]-L-lysine = [E2 ubiquitin-conjugating enzyme]-L-cysteine + N(6)-ubiquitinyl-[acceptor protein]-L-lysine.. The protein operates within protein modification; protein ubiquitination. Its function is as follows. E3 ubiquitin-protein ligase that mediates ubiquitination of TP73. Acts to stabilize TP73 and enhance activation of transcription by TP73. Involved in the regulation of mitotic metaphase/anaphase transition. The polypeptide is E3 ubiquitin-protein ligase HECW2 (HECW2) (Homo sapiens (Human)).